The primary structure comprises 63 residues: Large ribosomal subunit protein bL28 (63 aa).

The protein belongs to the bacterial ribosomal protein bL28 family.

The protein is Large ribosomal subunit protein bL28 of Geotalea uraniireducens (strain Rf4) (Geobacter uraniireducens).